The primary structure comprises 318 residues: Beta-galactosidase small subunit (318 aa).

It belongs to the bacterial beta-galactosidase small subunit family. In terms of assembly, heterodimer of a large (LacL) and a small subunit (LacM).

It catalyses the reaction Hydrolysis of terminal non-reducing beta-D-galactose residues in beta-D-galactosides.. Its function is as follows. Component of a beta-galactosidase. The protein is Beta-galactosidase small subunit of Latilactobacillus sakei (Lactobacillus sakei).